Consider the following 430-residue polypeptide: 3-phosphoshikimate 1-carboxyvinyltransferase (430 aa).

Residues Lys25, Ser26, and Arg30 each contribute to the 3-phosphoshikimate site. Lys25 provides a ligand contact to phosphoenolpyruvate. Residues Gly97 and Arg125 each contribute to the phosphoenolpyruvate site. Ser170, Gln172, Asp318, and Lys345 together coordinate 3-phosphoshikimate. Phosphoenolpyruvate is bound at residue Gln172. Asp318 (proton acceptor) is an active-site residue. Phosphoenolpyruvate is bound by residues Arg349 and Arg391.

Belongs to the EPSP synthase family. As to quaternary structure, monomer.

The protein localises to the cytoplasm. The enzyme catalyses 3-phosphoshikimate + phosphoenolpyruvate = 5-O-(1-carboxyvinyl)-3-phosphoshikimate + phosphate. Its pathway is metabolic intermediate biosynthesis; chorismate biosynthesis; chorismate from D-erythrose 4-phosphate and phosphoenolpyruvate: step 6/7. Its function is as follows. Catalyzes the transfer of the enolpyruvyl moiety of phosphoenolpyruvate (PEP) to the 5-hydroxyl of shikimate-3-phosphate (S3P) to produce enolpyruvyl shikimate-3-phosphate and inorganic phosphate. The sequence is that of 3-phosphoshikimate 1-carboxyvinyltransferase from Shouchella clausii (strain KSM-K16) (Alkalihalobacillus clausii).